A 461-amino-acid chain; its full sequence is SWM histone demethylase complex subunit phf1 (461 aa).

The disordered stretch occupies residues 79–130 (PYGGMTMPASSSSGATSVPPEQDPSLSVSFNRLPKSASTKTKNGRIRSSRRE). Residues 102 to 119 (PSLSVSFNRLPKSASTKT) are compositionally biased toward polar residues. The PHD-type zinc-finger motif lies at 190–246 (VTLCSVCQRGHSPLSNRIVFCDGCNSPYHQLCHHPPIDDATVQDVDAEWFCMKCQYR).

As to quaternary structure, component of the SWM histone demethylase complex composed of at least lsd1, lsd2, phf1 and phf2.

The protein resides in the nucleus. Component of the SWM histone demethylase complex that specifically demethylates H3K9me2, a specific tag for epigenetic transcriptional activation, thereby acting as a corepressor. Has a role in regulating heterochromatin propagation and euchromatic transcription. The protein is SWM histone demethylase complex subunit phf1 (phf1) of Schizosaccharomyces pombe (strain 972 / ATCC 24843) (Fission yeast).